We begin with the raw amino-acid sequence, 266 residues long: Dihydropteroate synthase (266 aa).

One can recognise a Pterin-binding domain in the interval 12–260 (AAIMGILNVT…DVKANQDIVA (249 aa)). Asn-19 contributes to the Mg(2+) binding site. Residues Thr-59, Asp-93, Asn-112, Asp-176, Lys-212, and 248–250 (RVH) each bind (7,8-dihydropterin-6-yl)methyl diphosphate.

The protein belongs to the DHPS family. Homodimer or homotrimer. It depends on Mg(2+) as a cofactor.

It catalyses the reaction (7,8-dihydropterin-6-yl)methyl diphosphate + 4-aminobenzoate = 7,8-dihydropteroate + diphosphate. The protein operates within cofactor biosynthesis; tetrahydrofolate biosynthesis; 7,8-dihydrofolate from 2-amino-4-hydroxy-6-hydroxymethyl-7,8-dihydropteridine diphosphate and 4-aminobenzoate: step 1/2. Its function is as follows. Catalyzes the condensation of para-aminobenzoate (pABA) with 6-hydroxymethyl-7,8-dihydropterin diphosphate (DHPt-PP) to form 7,8-dihydropteroate (H2Pte), the immediate precursor of folate derivatives. The protein is Dihydropteroate synthase (folP) of Streptococcus pyogenes serotype M1.